We begin with the raw amino-acid sequence, 159 residues long: MAHTHCISGLVGKLVMESEVNCNADKYYKLYKHHEDLPSVIPHIYTSVKAVEGHGTTSGCVKEWGYILEGKPLSCKEKTTYNDETRTIHHMVVAGDLMNDYKKFDATLVVNPKSNGHGCIVKWTIDYEKMNEDSPVPFGYLACYQQITEDLSSHLCASD.

It belongs to the MLP family. In terms of tissue distribution, laticifer.

The protein resides in the vacuole. The protein localises to the cytoplasmic vesicle. Not known; MLPs constitute up to 50% of the soluble latex protein. The sequence is that of Major latex protein 146 (MLP146) from Papaver somniferum (Opium poppy).